The following is a 99-amino-acid chain: MSSTATPTPSNVVLVGKKPVMNYVLAALTLLNQGVSEIIIKARGRAISKAVDTVEIVRNRFLPDKIEVKEIRIGSQVVTSQDGRQSRVSTIEIAIRKKA.

The residue at position 17 (Lys17) is an N6-acetyllysine.

Belongs to the histone-like Alba family. In terms of processing, acetylated. Acetylation at Lys-17 decreases DNA-binding affinity.

The protein resides in the cytoplasm. The protein localises to the chromosome. Its function is as follows. Binds double-stranded DNA tightly but without sequence specificity. Involved in DNA compaction. This chain is DNA/RNA-binding protein Alba 1, found in Sulfurisphaera tokodaii (strain DSM 16993 / JCM 10545 / NBRC 100140 / 7) (Sulfolobus tokodaii).